Reading from the N-terminus, the 658-residue chain is Endoglucanase 3 (658 aa).

A signal peptide spans 1 to 23; that stretch reads MQLKNFYPKMSVLGIATVMALTA. C24 carries the N-palmitoyl cysteine lipid modification. A lipid anchor (S-diacylglycerol cysteine) is attached at C24. A propeptide spanning residues 24–265 is cleaved from the precursor; it reads CGDENTQALF…TDSLFIDNIY (242 aa). Residues 42–83 form a disordered region; sequence ENQVPVSSSDMSPTSSDAVIDPTSSSAAVVDPSTLPAEGPIT. Residues 45–58 are compositionally biased toward low complexity; it reads VPVSSSDMSPTSSD. A CBM11 domain is found at 87–277; the sequence is GLGTLVDDFE…DSSEVEKDQP (191 aa). E448 serves as the catalytic Proton donor. E597 (nucleophile) is an active-site residue.

The protein belongs to the glycosyl hydrolase 5 (cellulase A) family. In terms of assembly, monomer. May be a lipoprotein and may be glycosylated.

The protein localises to the membrane. The enzyme catalyses Endohydrolysis of (1-&gt;4)-beta-D-glucosidic linkages in cellulose, lichenin and cereal beta-D-glucans.. Exhibits both endoglucanase and cellobiosidase activities. The polypeptide is Endoglucanase 3 (cel-3) (Fibrobacter succinogenes (strain ATCC 19169 / S85)).